Here is an 85-residue protein sequence, read N- to C-terminus: Coiled-coil-helix-coiled-coil-helix domain-containing protein 7 (85 aa).

A CHCH domain is found at 13–55; that stretch reads INPCLSESDASTRCLDENNYDKERCSTYFLKYKNCRKFWHSIM. Short sequence motifs (cx9C motif) lie at residues 16 to 26 and 37 to 47; these read CLSESDASTRC and CSTYFLKYKNC. Intrachain disulfides connect Cys16–Cys47 and Cys26–Cys37.

Belongs to the CHCHD7 family. Monomer.

The protein resides in the mitochondrion intermembrane space. The sequence is that of Coiled-coil-helix-coiled-coil-helix domain-containing protein 7 (CHCHD7) from Macaca fascicularis (Crab-eating macaque).